The primary structure comprises 707 residues: Zinc finger protein 60 (707 aa).

Residues 14–86 (VTFRDVAVDF…VKKETGRPSQ (73 aa)) form the KRAB domain. 19 C2H2-type zinc fingers span residues 173-195 (YKCKDCGKCFGCKSNLHQHESIH), 201-223 (YECKDCGKTFRLPQMLSRHQKSH), 229-251 (FECNICGKSFHLPTLLQYHKNIH), 257-282 (FECEECGKSFKSFNRISTLFQHRTIH), 288-310 (YKCNVCGKAFNRRSNLLQHQKIH), 316-338 (FHCKVCGKAFTVLAQLTRHENIH), 344-366 (FECKQCGKIFSNGSYLLRHYDTH), 372-394 (FECNICGKAFRLHLYLSEHQKTH), 400-422 (FKCKLCESAFRRKYQLSEHQRIH), 428-450 (YQCKDCWEFFRRRSNFIEHQSIH), 456-478 (FECKDCGKVFRLNIHLIRHQRFH), 484-506 (FECKECGKAFHFSSQLNNHKTSH), 512-534 (FECKECGKSFKRVSSLVEHRIIH), 540-562 (YKCNACGRAFNRRSNLMQHEKIH), 568-590 (FECKDCGKAFTVLAQLTRHQTIH), 596-618 (YECEQCGSAFRLPYQLTQHQRIH), 624-646 (FQCKECGRAFVRSTGLRIHERIH), 652-674 (FQCKECGEAFQYHYQFLGHFRIH), and 680-702 (YECSECGKYFTYGRDLKVHQSIH).

It belongs to the krueppel C2H2-type zinc-finger protein family. In terms of tissue distribution, expressed widely and evenly in most adult mouse tissues.

It localises to the nucleus. May have a role during differentiation processes. The protein is Zinc finger protein 60 (Zfp60) of Mus musculus (Mouse).